The chain runs to 156 residues: ATP synthase subunit b', chloroplastic (156 aa).

A helical membrane pass occupies residues 24 to 44; it reads ATLPLVAIQFILLMVTLNIIL.

The protein belongs to the ATPase B chain family. F-type ATPases have 2 components, F(1) - the catalytic core - and F(0) - the membrane proton channel. F(1) has five subunits: alpha(3), beta(3), gamma(1), delta(1), epsilon(1). F(0) has four main subunits: a(1), b(1), b'(1) and c(10-14). The alpha and beta chains form an alternating ring which encloses part of the gamma chain. F(1) is attached to F(0) by a central stalk formed by the gamma and epsilon chains, while a peripheral stalk is formed by the delta, b and b' chains.

The protein resides in the plastid. Its subcellular location is the chloroplast thylakoid membrane. In terms of biological role, f(1)F(0) ATP synthase produces ATP from ADP in the presence of a proton or sodium gradient. F-type ATPases consist of two structural domains, F(1) containing the extramembraneous catalytic core and F(0) containing the membrane proton channel, linked together by a central stalk and a peripheral stalk. During catalysis, ATP synthesis in the catalytic domain of F(1) is coupled via a rotary mechanism of the central stalk subunits to proton translocation. Component of the F(0) channel, it forms part of the peripheral stalk, linking F(1) to F(0). The b'-subunit is a diverged and duplicated form of b found in plants and photosynthetic bacteria. This chain is ATP synthase subunit b', chloroplastic, found in Thalassiosira pseudonana (Marine diatom).